Here is a 565-residue protein sequence, read N- to C-terminus: Phosphoenolpyruvate-protein phosphotransferase (565 aa).

Residue His-191 is the Tele-phosphohistidine intermediate of the active site. Residues Arg-289 and Arg-325 each coordinate phosphoenolpyruvate. Residues Glu-427 and Asp-451 each contribute to the Mg(2+) site. Phosphoenolpyruvate-binding positions include 450-451 (ND) and Arg-461. The active-site Proton donor is the Cys-498.

Belongs to the PEP-utilizing enzyme family. In terms of assembly, homodimer. It depends on Mg(2+) as a cofactor.

The protein resides in the cytoplasm. It carries out the reaction L-histidyl-[protein] + phosphoenolpyruvate = N(pros)-phospho-L-histidyl-[protein] + pyruvate. Its function is as follows. General (non sugar-specific) component of the phosphoenolpyruvate-dependent sugar phosphotransferase system (sugar PTS). This major carbohydrate active-transport system catalyzes the phosphorylation of incoming sugar substrates concomitantly with their translocation across the cell membrane. Enzyme I transfers the phosphoryl group from phosphoenolpyruvate (PEP) to the phosphoryl carrier protein (HPr). This Haloferax volcanii (strain ATCC 29605 / DSM 3757 / JCM 8879 / NBRC 14742 / NCIMB 2012 / VKM B-1768 / DS2) (Halobacterium volcanii) protein is Phosphoenolpyruvate-protein phosphotransferase (ptsI).